A 591-amino-acid polypeptide reads, in one-letter code: Aspartate--tRNA ligase (591 aa).

Position 173 (Glu-173) interacts with L-aspartate. Residues 197–200 (QLFK) form an aspartate region. Arg-219 contributes to the L-aspartate binding site. ATP is bound by residues 219 to 221 (RDE) and Gln-228. Residue His-448 coordinates L-aspartate. Position 482 (Glu-482) interacts with ATP. Arg-489 serves as a coordination point for L-aspartate. ATP is bound at residue 534 to 537 (GLDR).

Belongs to the class-II aminoacyl-tRNA synthetase family. Type 1 subfamily. As to quaternary structure, homodimer.

The protein localises to the cytoplasm. The catalysed reaction is tRNA(Asp) + L-aspartate + ATP = L-aspartyl-tRNA(Asp) + AMP + diphosphate. Its function is as follows. Catalyzes the attachment of L-aspartate to tRNA(Asp) in a two-step reaction: L-aspartate is first activated by ATP to form Asp-AMP and then transferred to the acceptor end of tRNA(Asp). The polypeptide is Aspartate--tRNA ligase (Shewanella frigidimarina (strain NCIMB 400)).